A 656-amino-acid chain; its full sequence is ATP-dependent zinc metalloprotease FtsH (656 aa).

The Cytoplasmic portion of the chain corresponds to 1-10; it reads MGDNRWLKNS. A helical membrane pass occupies residues 11 to 31; the sequence is FVYLIILVAALALFFQYLGPG. Over 32–116 the chain is Extracellular; sequence ASQTEEKGIA…IVQPAPAWGG (85 aa). The chain crosses the membrane as a helical span at residues 117–137; that stretch reads LLSIFTILLPTLLLIGFFVFF. Residues 138 to 656 are Cytoplasmic-facing; sequence MRQAQGSNNQ…GLGGPSPLPA (519 aa). Position 209–216 (209–216) interacts with ATP; that stretch reads GPPGTGKT. Zn(2+) is bound at residue His-432. Glu-433 is a catalytic residue. Residues His-436 and Asp-511 each coordinate Zn(2+). A compositionally biased stretch (polar residues) spans 622-632; it reads FSKSGSTTPNG. A disordered region spans residues 622–656; it reads FSKSGSTTPNGRTEDRPAQPDAPQMGLGGPSPLPA.

This sequence in the central section; belongs to the AAA ATPase family. The protein in the C-terminal section; belongs to the peptidase M41 family. Homohexamer. It depends on Zn(2+) as a cofactor.

The protein resides in the cell membrane. Acts as a processive, ATP-dependent zinc metallopeptidase for both cytoplasmic and membrane proteins. Plays a role in the quality control of integral membrane proteins. The protein is ATP-dependent zinc metalloprotease FtsH of Chloroflexus aggregans (strain MD-66 / DSM 9485).